Consider the following 311-residue polypeptide: Ribosomal RNA small subunit methyltransferase H (311 aa).

Residues 32–34, D52, F79, D100, and Q107 contribute to the S-adenosyl-L-methionine site; that span reads AGH. A disordered region spans residues 287-311; the sequence is TASQEELEENNRARSAKLRIAEKRK. Basic residues predominate over residues 300–311; sequence RSAKLRIAEKRK.

It belongs to the methyltransferase superfamily. RsmH family.

It is found in the cytoplasm. The enzyme catalyses cytidine(1402) in 16S rRNA + S-adenosyl-L-methionine = N(4)-methylcytidine(1402) in 16S rRNA + S-adenosyl-L-homocysteine + H(+). Functionally, specifically methylates the N4 position of cytidine in position 1402 (C1402) of 16S rRNA. The chain is Ribosomal RNA small subunit methyltransferase H from Bacillus subtilis (strain 168).